Consider the following 442-residue polypeptide: Cation channel sperm-associated protein 4 (442 aa).

The Cytoplasmic segment spans residues 1–66 (MSEKHKWWQQ…TQMYIKQLLR (66 aa)). A helical transmembrane segment spans residues 67-88 (HPAFQLLLAFLLLSNAITIALR). The Extracellular portion of the chain corresponds to 89-98 (TNSYLGQKHY). A helical transmembrane segment spans residues 99–125 (ELFSTIDDIVLTILICEVLLGWLNGFW). At 126-129 (IFWK) the chain is on the cytoplasmic side. Residues 130-153 (DGWNILNFAIVFILFMGFFIKQLD) traverse the membrane as a helical segment. Over 154-156 (MVA) the chain is Extracellular. Residues 157–175 (ITYPLRVLRLVHVCMAVEP) traverse the membrane as a helical segment. Residues 176 to 188 (LARIIKVILQSMP) are Cytoplasmic-facing. A helical membrane pass occupies residues 189-212 (DLANVMALILFFMLVFSVFGVTLF). Topologically, residues 213–222 (GAFVPKHFQN) are extracellular. The segment at residues 223–234 (MGVALYTLFICI) is an intramembrane region (helical; Pore-forming). The Extracellular segment spans residues 235-255 (TQDGWLDIYTDFQMDEREYAM). Residues 256-283 (EVGGAIYFAVFITLGAFIGLNLFVVVVT) traverse the membrane as a helical segment. Over 284-442 (TNLEQMMKTG…NMVNKHKFSH (159 aa)) the chain is Cytoplasmic.

The protein belongs to the cation channel sperm-associated (TC 1.A.1.19) family. In terms of assembly, component of the CatSper complex or CatSpermasome composed of the core pore-forming members CATSPER1, CATSPER2, CATSPER3 and CATSPER4 as well as auxiliary members CATSPERB, CATSPERG2, CATSPERD, CATSPERE, CATSPERZ, C2CD6/CATSPERT, SLCO6C1, TMEM249, TMEM262 and EFCAB9. HSPA1 may be an additional auxiliary complex member. The core complex members CATSPER1, CATSPER2, CATSPER3 and CATSPER4 form a heterotetrameric channel. The auxiliary CATSPERB, CATSPERG2, CATSPERD and CATSPERE subunits form a pavilion-like structure over the pore which stabilizes the complex through interactions with CATSPER4, CATSPER3, CATSPER1 and CATSPER2 respectively. SLCO6C1 interacts with CATSPERE and TMEM262/CATSPERH interacts with CATSPERB, further stabilizing the complex. C2CD6/CATSPERT interacts at least with CATSPERD and is required for targeting the CatSper complex in the flagellar membrane. In terms of tissue distribution, testis-specific.

Its subcellular location is the cell projection. The protein localises to the cilium. It localises to the flagellum membrane. The catalysed reaction is Ca(2+)(in) = Ca(2+)(out). With respect to regulation, in contrast to the human ortholog, not activated by progesterone. Activated by intracellular alkalinization. In terms of biological role, pore-forming subunit of the CatSper complex, a sperm-specific voltage-gated calcium channel that plays a central role in sperm cell hyperactivation. Controls calcium entry to mediate the hyperactivated motility, a step needed for sperm motility which is essential late in the preparation of sperm for fertilization. This is Cation channel sperm-associated protein 4 (Catsper4) from Mus musculus (Mouse).